The primary structure comprises 367 residues: UDP-galactopyranose mutase (367 aa).

Residues Phe12, 31 to 32 (EK), Asn39, and 56 to 57 (HI) contribute to the FAD site. Phe12 provides a ligand contact to UDP-alpha-D-galactose. The UDP-alpha-D-galactose site is built by Asn80, Thr152, Trp156, and Tyr181. Residue 212–213 (DF) coordinates FAD. UDP-alpha-D-galactose contacts are provided by Asn268, Arg278, and Tyr311. Arg340 serves as a coordination point for FAD. Tyr346 provides a ligand contact to UDP-alpha-D-galactose. 347–352 (YDMHQV) is a binding site for FAD.

As to quaternary structure, homodimer. FAD serves as cofactor.

It carries out the reaction UDP-alpha-D-galactose = UDP-alpha-D-galactofuranose. Its pathway is bacterial outer membrane biogenesis; lipopolysaccharide biosynthesis. Catalyzes the interconversion through a 2-keto intermediate of uridine diphosphogalactopyranose (UDP-GalP) into uridine diphosphogalactofuranose (UDP-GalF). This chain is UDP-galactopyranose mutase (glf), found in Escherichia coli (strain K12).